We begin with the raw amino-acid sequence, 93 residues long: YcgL domain-containing protein PSHAb0508 (93 aa).

The YcgL domain occupies 1–85 (MLTAVYKSKK…PQENLLSQLR (85 aa)).

This Pseudoalteromonas translucida (strain TAC 125) protein is YcgL domain-containing protein PSHAb0508.